The primary structure comprises 191 residues: Fe/S biogenesis protein NfuA (191 aa).

Positions 149 and 152 each coordinate [4Fe-4S] cluster.

It belongs to the NfuA family. Homodimer. Requires [4Fe-4S] cluster as cofactor.

Its function is as follows. Involved in iron-sulfur cluster biogenesis. Binds a 4Fe-4S cluster, can transfer this cluster to apoproteins, and thereby intervenes in the maturation of Fe/S proteins. Could also act as a scaffold/chaperone for damaged Fe/S proteins. The chain is Fe/S biogenesis protein NfuA from Escherichia coli O139:H28 (strain E24377A / ETEC).